The following is a 373-amino-acid chain: Queuine tRNA-ribosyltransferase accessory subunit 2 (373 aa).

Residues cysteine 320, cysteine 322, cysteine 325, and histidine 351 each contribute to the Zn(2+) site.

Belongs to the queuine tRNA-ribosyltransferase family. QTRT2 subfamily. In terms of assembly, heterodimer of a catalytic subunit and an accessory subunit. It depends on Zn(2+) as a cofactor.

Its subcellular location is the cytoplasm. Non-catalytic subunit of the queuine tRNA-ribosyltransferase (TGT) that catalyzes the base-exchange of a guanine (G) residue with queuine (Q) at position 34 (anticodon wobble position) in tRNAs with GU(N) anticodons (tRNA-Asp, -Asn, -His and -Tyr), resulting in the hypermodified nucleoside queuosine (7-(((4,5-cis-dihydroxy-2-cyclopenten-1-yl)amino)methyl)-7-deazaguanosine). The polypeptide is Queuine tRNA-ribosyltransferase accessory subunit 2 (Caenorhabditis elegans).